Reading from the N-terminus, the 319-residue chain is ATP-dependent 6-phosphofructokinase (319 aa).

Gly11 is a binding site for ATP. 21 to 25 provides a ligand contact to ADP; that stretch reads RAVVR. Residues 72–73 and 102–105 each bind ATP; these read RC and GDGS. Position 103 (Asp103) interacts with Mg(2+). 125-127 provides a ligand contact to substrate; sequence TID. The Proton acceptor role is filled by Asp127. An ADP-binding site is contributed by Arg154. Residues Arg162 and 169-171 each bind substrate; that span reads MGR. ADP-binding positions include 185–187, Arg211, and 213–215; these read GAE and KKH. Residues Glu222, Arg243, and 249-252 each bind substrate; that span reads HVQR.

It belongs to the phosphofructokinase type A (PFKA) family. ATP-dependent PFK group I subfamily. Prokaryotic clade 'B1' sub-subfamily. As to quaternary structure, homotetramer. Mg(2+) is required as a cofactor.

Its subcellular location is the cytoplasm. The enzyme catalyses beta-D-fructose 6-phosphate + ATP = beta-D-fructose 1,6-bisphosphate + ADP + H(+). The protein operates within carbohydrate degradation; glycolysis; D-glyceraldehyde 3-phosphate and glycerone phosphate from D-glucose: step 3/4. Its activity is regulated as follows. Allosterically activated by ADP and other diphosphonucleosides, and allosterically inhibited by phosphoenolpyruvate. Its function is as follows. Catalyzes the phosphorylation of D-fructose 6-phosphate to fructose 1,6-bisphosphate by ATP, the first committing step of glycolysis. The chain is ATP-dependent 6-phosphofructokinase from Geobacillus kaustophilus (strain HTA426).